The sequence spans 247 residues: tRNA (guanine-N(1)-)-methyltransferase (247 aa).

S-adenosyl-L-methionine-binding positions include G115 and 134–139 (IGDFVL).

The protein belongs to the RNA methyltransferase TrmD family. Homodimer.

It localises to the cytoplasm. The catalysed reaction is guanosine(37) in tRNA + S-adenosyl-L-methionine = N(1)-methylguanosine(37) in tRNA + S-adenosyl-L-homocysteine + H(+). Functionally, specifically methylates guanosine-37 in various tRNAs. This Anaeromyxobacter sp. (strain K) protein is tRNA (guanine-N(1)-)-methyltransferase.